Reading from the N-terminus, the 1143-residue chain is DNA polymerase II large subunit (1143 aa).

It belongs to the archaeal DNA polymerase II family. In terms of assembly, heterodimer of a large subunit and a small subunit.

It catalyses the reaction DNA(n) + a 2'-deoxyribonucleoside 5'-triphosphate = DNA(n+1) + diphosphate. The catalysed reaction is Exonucleolytic cleavage in the 3'- to 5'-direction to yield nucleoside 5'-phosphates.. Its function is as follows. Possesses two activities: a DNA synthesis (polymerase) and an exonucleolytic activity that degrades single-stranded DNA in the 3'- to 5'-direction. Has a template-primer preference which is characteristic of a replicative DNA polymerase. This Archaeoglobus fulgidus (strain ATCC 49558 / DSM 4304 / JCM 9628 / NBRC 100126 / VC-16) protein is DNA polymerase II large subunit (polC).